The primary structure comprises 361 residues: Phospho-N-acetylmuramoyl-pentapeptide-transferase (361 aa).

10 consecutive transmembrane segments (helical) span residues 28–48 (LAII…IKFL), 74–94 (TMGG…LADL), 99–119 (IWIT…DDYA), 133–153 (SKFL…EYLD), 168–188 (LSLD…VGSS), 203–223 (VPIA…GNLI), 236–256 (TGEL…FLWF), 263–283 (VFMG…ISVI), 288–308 (IVLA…ILQV), and 338–358 (KVVI…LSSL).

This sequence belongs to the glycosyltransferase 4 family. MraY subfamily. Mg(2+) serves as cofactor.

The protein localises to the cell inner membrane. It carries out the reaction UDP-N-acetyl-alpha-D-muramoyl-L-alanyl-gamma-D-glutamyl-meso-2,6-diaminopimeloyl-D-alanyl-D-alanine + di-trans,octa-cis-undecaprenyl phosphate = di-trans,octa-cis-undecaprenyl diphospho-N-acetyl-alpha-D-muramoyl-L-alanyl-D-glutamyl-meso-2,6-diaminopimeloyl-D-alanyl-D-alanine + UMP. The protein operates within cell wall biogenesis; peptidoglycan biosynthesis. Functionally, catalyzes the initial step of the lipid cycle reactions in the biosynthesis of the cell wall peptidoglycan: transfers peptidoglycan precursor phospho-MurNAc-pentapeptide from UDP-MurNAc-pentapeptide onto the lipid carrier undecaprenyl phosphate, yielding undecaprenyl-pyrophosphoryl-MurNAc-pentapeptide, known as lipid I. In Rickettsia prowazekii (strain Madrid E), this protein is Phospho-N-acetylmuramoyl-pentapeptide-transferase.